Here is a 165-residue protein sequence, read N- to C-terminus: GTP-dependent dephospho-CoA kinase (165 aa).

Residues aspartate 44, valine 45, aspartate 63, lysine 65, glutamate 115, and aspartate 138 each coordinate GTP.

This sequence belongs to the GTP-dependent DPCK family.

It carries out the reaction 3'-dephospho-CoA + GTP = GDP + CoA + H(+). It participates in cofactor biosynthesis; coenzyme A biosynthesis. Its function is as follows. Catalyzes the GTP-dependent phosphorylation of the 3'-hydroxyl group of dephosphocoenzyme A to form coenzyme A (CoA). The chain is GTP-dependent dephospho-CoA kinase from Picrophilus torridus (strain ATCC 700027 / DSM 9790 / JCM 10055 / NBRC 100828 / KAW 2/3).